The primary structure comprises 692 residues: Putative clathrin assembly protein At1g14910 (692 aa).

The ENTH domain maps to 24-161 (RVNSDYAELD…ECFRVLKYDI (138 aa)). Residues 325–383 (YTPDDGLTSEDVGPSHEEHETSSPSDSAVVPSEETQLSSQSPPSVETPQNFIDTDDLLG) form a disordered region. Positions 357-376 (EETQLSSQSPPSVETPQNFI) are enriched in polar residues. Ser363 carries the phosphoserine modification. The stretch at 532–548 (FGEFPIVPVSEPQSTTS) is repeat 1. Residues 532–666 (FGEFPIVPVS…PVSEPQNTTG (135 aa)) form an 8 X 17 AA approximate tandem repeats region. The 2; truncated repeat unit spans residues 549-564 (FGAFPVPVSEPSNTTG). Tandem repeats lie at residues 565 to 581 (FGEI…NTTA), 582 to 598 (FGEF…NITG), 599 to 615 (FGAL…NTTG), 616 to 632 (FGEF…NTTG), 633 to 649 (FGAL…KTTG), and 650 to 666 (LGEF…NTTG).

As to expression, expressed in the whole plant.

It is found in the membrane. The protein localises to the clathrin-coated pit. The protein resides in the golgi apparatus. It localises to the cytoplasmic vesicle. Its subcellular location is the clathrin-coated vesicle. This chain is Putative clathrin assembly protein At1g14910, found in Arabidopsis thaliana (Mouse-ear cress).